We begin with the raw amino-acid sequence, 390 residues long: Putative methylesterase 11, chloroplastic (390 aa).

The N-terminal 46 residues, 1-46 (MGNLCSLFTPPKPVKKRKPITKRQSSIGASSSGSGLNSNRWNNRVR), are a transit peptide targeting the chloroplast. 2 disordered regions span residues 1-52 (MGNL…SSRR) and 94-119 (QGSC…DPLL). Positions 25–48 (SSIGASSSGSGLNSNRWNNRVRSS) are enriched in low complexity. A compositionally biased stretch (polar residues) spans 94-104 (QGSCSKKNQLP). Residues 105–114 (RSSSSRSRSS) show a composition bias toward low complexity. The region spanning 137 to 241 (NHFVLVHGGS…KAVFLAAAML (105 aa)) is the AB hydrolase-1 domain. Asp-213 functions as the Acyl-ester intermediate in the catalytic mechanism. Catalysis depends on charge relay system residues Asp-339 and His-367.

The protein belongs to the AB hydrolase superfamily. Methylesterase family.

It is found in the plastid. Its subcellular location is the chloroplast. Its function is as follows. Putative methylesterase. This chain is Putative methylesterase 11, chloroplastic, found in Arabidopsis thaliana (Mouse-ear cress).